We begin with the raw amino-acid sequence, 149 residues long: Gamma-glutamylaminecyclotransferase (149 aa).

7 to 10 (YGTL) provides a ligand contact to substrate. Glu-82 serves as the catalytic Proton acceptor.

This sequence belongs to the gamma-glutamylcyclotransferase family. In terms of assembly, monomer.

It catalyses the reaction epsilon-(gamma-L-glutamyl)-L-lysine = 5-oxo-L-proline + L-lysine. Its function is as follows. Contributes to degradation of proteins cross-linked by transglutaminases by degrading the cross-link between a lysine and a glutamic acid residue. Catalyzes the formation of 5-oxo-L-proline from L-gamma-glutamyl-L-epsilon-lysine. Inactive with L-gamma-glutamyl-alpha-amino acid substrates such as L-gamma-glutamyl-L-alpha-cysteine and L-gamma-glutamyl-L-alpha-alanine. In Rattus norvegicus (Rat), this protein is Gamma-glutamylaminecyclotransferase (Ggact).